Reading from the N-terminus, the 198-residue chain is uncharacterized protein (198 aa).

One can recognise an HTH tetR-type domain in the interval 11–71 (EGTHKAILSA…DSFLSTATDR (61 aa)). Positions 34–53 (TVDKIAERAKVSKATIYKWW) form a DNA-binding region, H-T-H motif.

This is an uncharacterized protein from Bacillus subtilis (strain 168).